A 276-amino-acid polypeptide reads, in one-letter code: MEQLIRDEMRVLPTIDPHFEIERRVAFIKKKLVESGCKSLVLGISGGVDSTTCGRLAQVAVDQLNQESNSNDYQFVAVRLPYGEQKDEEEAQLALSFIQPTHSVSVNIKAGVDGLHAASHVALEGTGLIPQDAAKVDFVKGNVKARARMVAQYEIAGYVGGLVLGTDHSAENITGFYTKFGDGACDLAPLFGLSKRQVRLVAETLGAPELLVKKVPTADLEELAPQKADEDALNLTYEQIDDFLEGKPVSEAVSARLVSIYKATQHKRQPIPTIYD.

43-50 (GISGGVDS) is an ATP binding site. Asp-49 lines the Mg(2+) pocket. Arg-146 contacts deamido-NAD(+). Thr-166 serves as a coordination point for ATP. Residue Glu-171 coordinates Mg(2+). Lys-179 and Asp-186 together coordinate deamido-NAD(+). Residues Lys-195 and Thr-217 each coordinate ATP. A deamido-NAD(+)-binding site is contributed by 266–267 (HK).

This sequence belongs to the NAD synthetase family. In terms of assembly, homodimer.

It carries out the reaction deamido-NAD(+) + NH4(+) + ATP = AMP + diphosphate + NAD(+) + H(+). It participates in cofactor biosynthesis; NAD(+) biosynthesis; NAD(+) from deamido-NAD(+) (ammonia route): step 1/1. Its function is as follows. Catalyzes the ATP-dependent amidation of deamido-NAD to form NAD. Uses ammonia as a nitrogen source. The protein is NH(3)-dependent NAD(+) synthetase of Vibrio vulnificus (strain YJ016).